A 387-amino-acid chain; its full sequence is Sharpin (387 aa).

The interval 1–180 (MAPPAGGAAA…EREELAGSLA (180 aa)) is self-association. The segment covering 122 to 132 (EGQNGSKSNSP) has biased composition (polar residues). Residues 122-169 (EGQNGSKSNSPPALGPEACPVSLPSPPEASTLKGPPPEADLPRSPGNL) are disordered. A Phosphoserine modification is found at Ser165. The interval 175–310 (LAGSLARAIA…SAPREAPATG (136 aa)) is interaction with SHANK1. The Ubiquitin-like domain occupies 219–288 (IRLQVTLEDA…PERSLASYGV (70 aa)). The interval 305 to 349 (EAPATGPSPQHPQKMDGELGRLFPPSLGLPPGPQPAASSLPSPLQ) is disordered. Position 312 is a phosphoserine (Ser312). Positions 339-349 (PAASSLPSPLQ) are enriched in low complexity. The RanBP2-type zinc-finger motif lies at 348-377 (LQPSWSCPSCTFINAPDRPGCEMCSTQRPC).

Monomer and homodimer. Component of the LUBAC complex (linear ubiquitin chain assembly complex) which consists of SHARPIN, RBCK1 and RNF31. LUBAC has a MW of approximately 600 kDa suggesting a heteromultimeric assembly of its subunits. Associates with the TNF-R1 signaling complex (TNF-RSC) in a stimulation-dependent manner. Interacts with EYA1, EYA2, SHANK1 and SHANK3 (via ANK repeats). As to expression, highly expressed in skeletal muscle and placenta and at lower levels in brain, heart, colon without mucosa, thymus, spleen, kidney, liver, small intestine, lung and peripheral blood leukocytes. Up-regulated in various tumor tissues such as kidney, liver, ovary and pancreas tumors.

Its subcellular location is the cytoplasm. The protein resides in the cytosol. The protein localises to the synapse. Its pathway is protein modification; protein ubiquitination. In terms of biological role, component of the LUBAC complex which conjugates linear polyubiquitin chains in a head-to-tail manner to substrates and plays a key role in NF-kappa-B activation and regulation of inflammation. LUBAC conjugates linear polyubiquitin to IKBKG and RIPK1 and is involved in activation of the canonical NF-kappa-B and the JNK signaling pathways. Linear ubiquitination mediated by the LUBAC complex interferes with TNF-induced cell death and thereby prevents inflammation. LUBAC is recruited to the TNF-R1 signaling complex (TNF-RSC) following polyubiquitination of TNF-RSC components by BIRC2 and/or BIRC3 and to conjugate linear polyubiquitin to IKBKG and possibly other components contributing to the stability of the complex. The LUBAC complex is also involved in innate immunity by conjugating linear polyubiquitin chains at the surface of bacteria invading the cytosol to form the ubiquitin coat surrounding bacteria. LUBAC is not able to initiate formation of the bacterial ubiquitin coat, and can only promote formation of linear polyubiquitins on pre-existing ubiquitin. The bacterial ubiquitin coat acts as an 'eat-me' signal for xenophagy and promotes NF-kappa-B activation. Together with OTULIN, the LUBAC complex regulates the canonical Wnt signaling during angiogenesis. The protein is Sharpin of Homo sapiens (Human).